Consider the following 422-residue polypeptide: Adenylosuccinate synthetase (422 aa).

Residues 11–17 and 39–41 contribute to the GTP site; these read GDEGKGK and GHT. The active-site Proton acceptor is the Asp-12. Mg(2+)-binding residues include Asp-12 and Gly-39. IMP-binding positions include 12-15, 37-40, Thr-129, Arg-143, Asn-219, Thr-234, and Arg-298; these read DEGK and NAGH. Residue His-40 is the Proton donor of the active site. 294-300 contributes to the substrate binding site; the sequence is VTTGRRR. GTP is bound by residues Arg-300, 326–328, and 409–411; these read KLD and GTG.

It belongs to the adenylosuccinate synthetase family. As to quaternary structure, homodimer. The cofactor is Mg(2+).

It localises to the cytoplasm. The enzyme catalyses IMP + L-aspartate + GTP = N(6)-(1,2-dicarboxyethyl)-AMP + GDP + phosphate + 2 H(+). The protein operates within purine metabolism; AMP biosynthesis via de novo pathway; AMP from IMP: step 1/2. In terms of biological role, plays an important role in the de novo pathway and in the salvage pathway of purine nucleotide biosynthesis. Catalyzes the first committed step in the biosynthesis of AMP from IMP. This chain is Adenylosuccinate synthetase, found in Ajellomyces capsulatus (strain NAm1 / WU24) (Darling's disease fungus).